The sequence spans 219 residues: Large ribosomal subunit protein bL25 (219 aa).

The segment at 176-219 is disordered; that stretch reads VTVVPPTDEPSEEEVEAMEGESATEEPEVVDEDKEDDEEENKED. Residues 184–219 are compositionally biased toward acidic residues; it reads EPSEEEVEAMEGESATEEPEVVDEDKEDDEEENKED.

Belongs to the bacterial ribosomal protein bL25 family. CTC subfamily. Part of the 50S ribosomal subunit; part of the 5S rRNA/L5/L18/L25 subcomplex. Contacts the 5S rRNA. Binds to the 5S rRNA independently of L5 and L18.

This is one of the proteins that binds to the 5S RNA in the ribosome where it forms part of the central protuberance. The sequence is that of Large ribosomal subunit protein bL25 from Staphylococcus epidermidis (strain ATCC 12228 / FDA PCI 1200).